We begin with the raw amino-acid sequence, 373 residues long: P2Y purinoceptor 1 (373 aa).

Topologically, residues 1–51 (MTEVLWPAAPNGTDAAFLASPGFHWGNSTATSTAAAAAPFRCALTKTGFQF) are extracellular. Asparagine 11 and asparagine 27 each carry an N-linked (GlcNAc...) asparagine glycan. 2 disulfide bridges follow: cysteine 42/cysteine 296 and cysteine 124/cysteine 202. Lysine 46 provides a ligand contact to ADP. Residues 52 to 74 (YYLPAVYIVVFIIGFLGNSIAIW) traverse the membrane as a helical segment. The Cytoplasmic portion of the chain corresponds to 75-87 (MFVFHMKPWSGIS). Residues 88-109 (VYMFNLALADFLYVLTLPALIF) traverse the membrane as a helical segment. Residues 110–125 (YYFNKTNWIFGDAMCK) are Extracellular-facing. Asparagine 113 carries N-linked (GlcNAc...) asparagine glycosylation. The helical transmembrane segment at 126-147 (LQRFIFHVNLYGSILFLTCISA) threads the bilayer. The Cytoplasmic segment spans residues 148 to 166 (HRYSGVVYPLKSLGRLKKK). Residues 167-188 (NAVYISVLVWLIVVVAISPILF) traverse the membrane as a helical segment. Residues 189–214 (YSGTGIRKNKTITCYDTTSDEYLRSY) are Extracellular-facing. N-linked (GlcNAc...) asparagine glycosylation is present at asparagine 197. 203–205 (YDT) contributes to the ADP binding site. The helical transmembrane segment at 215-237 (FIYSMCTTVAMFCVPLVLILGCY) threads the bilayer. The Cytoplasmic portion of the chain corresponds to 238 to 260 (GLIVRALIYKDLDNSPLRRKSIY). Residues 261–284 (LVIIVLTVFAVSYIPFHVMKTMNL) form a helical membrane-spanning segment. ADP-binding positions include 283–287 (NLRAR), 303–306 (YATY), and arginine 310. At 285-303 (RARLDFQTPEMCTFNDRVY) the chain is on the extracellular side. Residues 304–325 (ATYQVTRGLASLNSCVDPILYF) traverse the membrane as a helical segment. Residues 326-373 (LAGDTFRRRLSRATRKASRRSEANLQSKSEDMTLNILSEFKQNGDTSL) lie on the Cytoplasmic side of the membrane.

Belongs to the G-protein coupled receptor 1 family.

The protein resides in the cell membrane. Receptor for extracellular adenine nucleotides such as ADP. In platelets, binding to ADP leads to mobilization of intracellular calcium ions via activation of phospholipase C, a change in platelet shape, and ultimately platelet aggregation. The polypeptide is P2Y purinoceptor 1 (P2RY1) (Cavia porcellus (Guinea pig)).